The primary structure comprises 833 residues: AdoMet-dependent rRNA methyltransferase SPB1 (833 aa).

Residues Gly59, Trp61, Asp79, Asp95, and Asp120 each contribute to the S-adenosyl-L-methionine site. The Proton acceptor role is filled by Lys160. 2 coiled-coil regions span residues 348 to 389 and 453 to 481; these read EEEQ…QLNM and RDEL…SERD. Positions 477 to 493 are enriched in basic and acidic residues; sequence KSERDAKFRAKQARESS. 3 disordered regions span residues 477 to 532, 592 to 645, and 776 to 810; these read KSER…SDDD, KRKL…EKHS, and VTKK…GKYK. Acidic residues-rich tracts occupy residues 505-532 and 622-634; these read QSDE…SDDD and EDGD…DSEE. Over residues 635–645 the composition is skewed to basic and acidic residues; it reads EAKRTKQEKHS. Residues 730–782 adopt a coiled-coil conformation; sequence AEAKARKKHRAVARLEKLKKKAGLINDDSDKSEKDKAEEIAKLMRKVTKKAKQ.

The protein belongs to the class I-like SAM-binding methyltransferase superfamily. RNA methyltransferase RlmE family. SPB1 subfamily. In terms of assembly, component of the nucleolar and nucleoplasmic pre-60S ribosomal particle.

The protein localises to the nucleus. It is found in the nucleolus. The enzyme catalyses a ribonucleotide in rRNA + S-adenosyl-L-methionine = a 2'-O-methylribonucleotide in rRNA + S-adenosyl-L-homocysteine + H(+). Functionally, required for proper assembly of pre-ribosomal particles during the biogenesis of the 60S ribosomal subunit. The polypeptide is AdoMet-dependent rRNA methyltransferase SPB1 (Kluyveromyces lactis (strain ATCC 8585 / CBS 2359 / DSM 70799 / NBRC 1267 / NRRL Y-1140 / WM37) (Yeast)).